The chain runs to 137 residues: Cellular retinoic acid-binding protein 1 (137 aa).

Positions 21–31 (KALGVNAMLRK) match the Nuclear localization signal motif. 132–134 (RIY) contacts all-trans-retinoate.

It belongs to the calycin superfamily. Fatty-acid binding protein (FABP) family.

Its subcellular location is the cytoplasm. In terms of biological role, cytosolic CRABPs may regulate the access of retinoic acid to the nuclear retinoic acid receptors. This chain is Cellular retinoic acid-binding protein 1 (CRABP1), found in Gallus gallus (Chicken).